Here is a 174-residue protein sequence, read N- to C-terminus: U-stichotoxin-Hau2a (174 aa).

Positions 1 to 18 (MKPIFIVALLFSTCLVNA) are cleaved as a signal peptide. The propeptide occupies 19–33 (KPSINDADIKREPEP). Hydroxyproline is present on proline 39. 2 disulfides stabilise this stretch: cysteine 40–cysteine 51 and cysteine 43–cysteine 58. Residues 61–67 (RKREPEP) constitute a propeptide that is removed on maturation. Proline 73 bears the Hydroxyproline mark. 2 disulfide bridges follow: cysteine 74–cysteine 85 and cysteine 77–cysteine 92. Positions 95-101 (RKREPEP) are excised as a propeptide. Residue proline 107 is modified to Hydroxyproline. 2 disulfide bridges follow: cysteine 108–cysteine 119 and cysteine 111–cysteine 126. Positions 129–135 (RKREPEP) are excised as a propeptide. Proline 141 carries the hydroxyproline modification. 2 cysteine pairs are disulfide-bonded: cysteine 142-cysteine 153 and cysteine 145-cysteine 160. A propeptide spanning residues 163 to 174 (RKREPENQDLWS) is cleaved from the precursor.

Belongs to the sea anemone BBH family.

It is found in the secreted. Its subcellular location is the nematocyst. Functionally, neurotoxin that paralyzes freshwater crabs at high concentration. This is U-stichotoxin-Hau2a from Heteractis aurora (Banded sea anemone).